The following is a 155-amino-acid chain: 6,7-dimethyl-8-ribityllumazine synthase (155 aa).

5-amino-6-(D-ribitylamino)uracil-binding positions include phenylalanine 24, 58 to 60, and 82 to 84; these read AFE and AII. Position 87–88 (87–88) interacts with (2S)-2-hydroxy-3-oxobutyl phosphate; the sequence is ST. The active-site Proton donor is histidine 90. 5-amino-6-(D-ribitylamino)uracil is bound at residue phenylalanine 115. Arginine 129 is a (2S)-2-hydroxy-3-oxobutyl phosphate binding site.

This sequence belongs to the DMRL synthase family.

The enzyme catalyses (2S)-2-hydroxy-3-oxobutyl phosphate + 5-amino-6-(D-ribitylamino)uracil = 6,7-dimethyl-8-(1-D-ribityl)lumazine + phosphate + 2 H2O + H(+). It participates in cofactor biosynthesis; riboflavin biosynthesis; riboflavin from 2-hydroxy-3-oxobutyl phosphate and 5-amino-6-(D-ribitylamino)uracil: step 1/2. Its function is as follows. Catalyzes the formation of 6,7-dimethyl-8-ribityllumazine by condensation of 5-amino-6-(D-ribitylamino)uracil with 3,4-dihydroxy-2-butanone 4-phosphate. This is the penultimate step in the biosynthesis of riboflavin. In Chlorobium luteolum (strain DSM 273 / BCRC 81028 / 2530) (Pelodictyon luteolum), this protein is 6,7-dimethyl-8-ribityllumazine synthase.